The primary structure comprises 1320 residues: Sister chromatid cohesion protein PDS5 homolog A (1320 aa).

HEAT repeat units lie at residues 156 to 195 (NEIF…EGDG), 272 to 310 (PLLL…AKDS), 388 to 426 (NLVN…KYCL), 709 to 747 (PQIR…NKEV), and 990 to 1028 (SLLP…CLWF). Polar residues predominate over residues 1158 to 1179 (TFTSETGSNASTNSQPSSPATN). Positions 1158 to 1320 (TFTSETGSNA…APQRQIDLQR (163 aa)) are disordered. Residues 1180 to 1194 (KSRDVSSEVGARENE) show a composition bias toward basic and acidic residues. The segment covering 1225 to 1241 (GTENSVSSNPSAGSQPP) has biased composition (polar residues). Low complexity predominate over residues 1255-1267 (AGAATQEKEAGAT). Over residues 1283-1293 (QDPSSTASTDA) the composition is skewed to polar residues. Residues 1294–1309 (LSDKTPKQQKEAEPKR) show a composition bias toward basic and acidic residues.

It belongs to the PDS5 family. Interacts with the cohesin complex. Binds chromatin in a cohesin-dependent manner.

Its subcellular location is the nucleus. Its function is as follows. May regulate sister chromatid cohesion during mitosis and couple it to DNA replication. This chain is Sister chromatid cohesion protein PDS5 homolog A, found in Danio rerio (Zebrafish).